Consider the following 89-residue polypeptide: Small ribosomal subunit protein uS15 (89 aa).

This sequence belongs to the universal ribosomal protein uS15 family. Part of the 30S ribosomal subunit. Forms a bridge to the 50S subunit in the 70S ribosome, contacting the 23S rRNA.

Its function is as follows. One of the primary rRNA binding proteins, it binds directly to 16S rRNA where it helps nucleate assembly of the platform of the 30S subunit by binding and bridging several RNA helices of the 16S rRNA. In terms of biological role, forms an intersubunit bridge (bridge B4) with the 23S rRNA of the 50S subunit in the ribosome. The polypeptide is Small ribosomal subunit protein uS15 (Photorhabdus luminescens (Xenorhabdus luminescens)).